The chain runs to 188 residues: Protein ORFV073 (188 aa).

As to quaternary structure, interacts with host IKBKG; this interaction inhibits host NF-kappa-B pathway activation.

It localises to the host nucleus. Its subcellular location is the host cytoplasm. The protein localises to the host perinuclear region. It is found in the virion. Functionally, plays a role in the inhibition of the host NF-kappa-B pathway early during infection. Prevents the host RELA subunit from reaching the nucleus and activate transcription. The chain is Protein ORFV073 from Capra hircus (Goat).